A 481-amino-acid polypeptide reads, in one-letter code: Cysteine--tRNA ligase (481 aa).

Position 29 (cysteine 29) interacts with Zn(2+). A 'HIGH' region motif is present at residues 31-41 (VTVYDYCHIGH). Cysteine 209, histidine 234, and glutamate 238 together coordinate Zn(2+). The 'KMSKS' region motif lies at 266-270 (KMSKS). Position 269 (lysine 269) interacts with ATP.

Belongs to the class-I aminoacyl-tRNA synthetase family. In terms of assembly, monomer. Zn(2+) serves as cofactor.

The protein resides in the cytoplasm. It carries out the reaction tRNA(Cys) + L-cysteine + ATP = L-cysteinyl-tRNA(Cys) + AMP + diphosphate. The protein is Cysteine--tRNA ligase of Syntrophotalea carbinolica (strain DSM 2380 / NBRC 103641 / GraBd1) (Pelobacter carbinolicus).